The primary structure comprises 321 residues: Putrescine export system permease protein SapB (321 aa).

At 1-8 (MIIFTLRR) the chain is on the cytoplasmic side. The helical transmembrane segment at 9 to 29 (ILLLIVTLFLLTFVGFSLSYF) threads the bilayer. Topologically, residues 30–80 (TPHAPLQGASLWNAWVFWFNGLIHWDFGVSSINGQPIAEQLKEVFPATMEL) are periplasmic. Residues 74 to 302 (FPATMELCIL…SLVIIVNVIS (229 aa)) form the ABC transmembrane type-1 domain. Residues 81-101 (CILAFGFALIVGIPVGMIAGI) form a helical membrane-spanning segment. The Cytoplasmic portion of the chain corresponds to 102–112 (TRHKWQDNLIN). A helical transmembrane segment spans residues 113 to 133 (AIALLGFSIPVFWLALLLTLF). Over 134–174 (CSLTLGWLPVSGRFDLLYEVKPITGFALIDAWLSDSPWRDE) the chain is Periplasmic. A helical membrane pass occupies residues 175-195 (MIMSAIRHMILPVITLSVAPT). At 196-248 (TEVIRLMRISTIEVYDQNYVKAAATRGLSRFTILRRHVLHNALPPVIPRLGLQ) the chain is on the cytoplasmic side. The helical transmembrane segment at 249–269 (FSTMLTLAMITEMVFSWPGLG) threads the bilayer. At 270–280 (RWLINAIRQQD) the chain is on the periplasmic side. The helical transmembrane segment at 281–301 (YAAISAGVMVCGSLVIIVNVI) threads the bilayer. At 302–321 (SDILGAMANPLKHKEWYALR) the chain is on the cytoplasmic side.

Belongs to the binding-protein-dependent transport system permease family. OppBC subfamily.

It is found in the cell inner membrane. Its function is as follows. Part of a putrescine export transport system, does not play a role in resistance to antimicrobial peptides. This Escherichia coli (strain K12) protein is Putrescine export system permease protein SapB (sapB).